The chain runs to 460 residues: Proton extrusion protein PxcA (460 aa).

2 disordered regions span residues 82–128 (FSRL…QRRD) and 143–190 (SRYK…GSGN). The span at 90–102 (QNGSGPTSAQDKA) shows a compositional bias: polar residues. Residues 107-120 (AAEANVSESSSENS) show a composition bias toward low complexity. The segment covering 151–163 (KSQPISASISTSP) has biased composition (polar residues). A compositionally biased stretch (low complexity) spans 171–184 (QPTSTQPSSSNVSV). 4 consecutive transmembrane segments (helical) span residues 242 to 262 (FLLLLAILPLLTQILSKNFLF), 337 to 357 (GLKNILADLLSLLVFGWLIFV), 373 to 393 (IYGLSDSAKAFIIILFTDVFV), and 420 to 440 (FIYGFIATFPVFLDTLFKYWI).

This sequence belongs to the CemA family.

The protein resides in the cell inner membrane. Required for H(+) efflux immediately after light irradiation to form a rapid H(+) concentration gradient across the thylakoid membranes. Together with PxcL, contributes to transient H(+) uptake following dark to light transition. The polypeptide is Proton extrusion protein PxcA (Synechococcus sp. (strain JA-2-3B'a(2-13)) (Cyanobacteria bacterium Yellowstone B-Prime)).